We begin with the raw amino-acid sequence, 143 residues long: Sporulation-specific protein 73 (143 aa).

This sequence belongs to the SPO73 family. Interacts with SPO71.

Its subcellular location is the cytoplasm. The protein resides in the prospore membrane. Required for spore wall assembly and ascus formation. Involved in the formation and elongation of prospore membranes. This Saccharomyces cerevisiae (strain ATCC 204508 / S288c) (Baker's yeast) protein is Sporulation-specific protein 73.